The following is a 700-amino-acid chain: Elongation factor G 2 (700 aa).

The region spanning Glu8 to Val290 is the tr-type G domain. GTP contacts are provided by residues Ala17–Thr24, Asp88–His92, and Asn142–Asp145.

This sequence belongs to the TRAFAC class translation factor GTPase superfamily. Classic translation factor GTPase family. EF-G/EF-2 subfamily.

The protein localises to the cytoplasm. In terms of biological role, catalyzes the GTP-dependent ribosomal translocation step during translation elongation. During this step, the ribosome changes from the pre-translocational (PRE) to the post-translocational (POST) state as the newly formed A-site-bound peptidyl-tRNA and P-site-bound deacylated tRNA move to the P and E sites, respectively. Catalyzes the coordinated movement of the two tRNA molecules, the mRNA and conformational changes in the ribosome. The sequence is that of Elongation factor G 2 from Burkholderia orbicola (strain AU 1054).